The sequence spans 132 residues: Outer membrane protein RomA (132 aa).

This sequence to M.tuberculosis Rv0906.

The protein resides in the cell outer membrane. This chain is Outer membrane protein RomA (romA), found in Klebsiella pneumoniae.